The primary structure comprises 122 residues: Large ribosomal subunit protein uL14 (122 aa).

Belongs to the universal ribosomal protein uL14 family. Part of the 50S ribosomal subunit. Forms a cluster with proteins L3 and L19. In the 70S ribosome, L14 and L19 interact and together make contacts with the 16S rRNA in bridges B5 and B8.

In terms of biological role, binds to 23S rRNA. Forms part of two intersubunit bridges in the 70S ribosome. This is Large ribosomal subunit protein uL14 from Shewanella amazonensis (strain ATCC BAA-1098 / SB2B).